A 125-amino-acid chain; its full sequence is MPRPMKWRKVCCLPESNRFGPLDLNAGDQYQVKMTVDEYETIRLIDLEGFTQEECAKKMNVARTTVQGIYIEARKKLAESLVNGKVLQIEGGEYRLCDGLGNGCGQGCYKRRRRMGCSGKEEGED.

Belongs to the UPF0251 family.

This chain is UPF0251 protein Dhaf_1981, found in Desulfitobacterium hafniense (strain DSM 10664 / DCB-2).